The chain runs to 826 residues: Protein lozenge (826 aa).

Disordered stretches follow at residues 1-45 (MHLH…ASQT), 87-171 (PVSV…WSSS), and 214-263 (ASVG…NNNN). A compositionally biased stretch (pro residues) spans 12 to 24 (PPSPSPNPTPTPS). Over residues 106–141 (SHHHHHLHHHYSPYHHAHPYHPPHPHAPHHHHHHHP) the composition is skewed to basic residues. The segment covering 142 to 153 (PYPYPPAGPHPP) has biased composition (pro residues). Positions 156 to 171 (VTSSSTSPTGNGWSSS) are enriched in polar residues. Residues 275 to 403 (LVQKRQQEHP…TVDGPREPRS (129 aa)) enclose the Runt domain. Low complexity predominate over residues 774–798 (QQQQQQQQQQQQVHHPQQQQVESAG). Positions 774–826 (QQQQQQQQQQQQVHHPQQQQVESAGEVGGSGAGGVESAREEDVGDLSQVWRPY) are disordered.

In terms of tissue distribution, expressed in the pupal eye during programmed cell death.

The protein localises to the nucleus. Involved in prepatterning photoreceptor precursors in the developing eye; in the larval eye disk it defines a subset of cells as an equipotential group that is competent to respond to the sevenless developmental signal and another subset that confer proper photoreceptor identity by positively regulating the homeo box gene Bar. Involved in the aop/pnt dynamic in a Ras-dependent manner to regulate pros expression. Promotes apoptosis in the pupal eye by directly activating aos and klu. Also modulates hid- and rpr-mediated cell death. Regulates amos function in olfactory sensilla development. The chain is Protein lozenge (lz) from Drosophila melanogaster (Fruit fly).